Reading from the N-terminus, the 1012-residue chain is Roundabout homolog 4 (1012 aa).

The signal sequence occupies residues 1-27 (MGSGGTGLLGTEWPLPLLLLFIMGGEA). Ig-like C2-type domains lie at 32–132 (PQIL…ARLS) and 138–225 (EDFQ…ARVS). 2 disulfide bridges follow: Cys-53-Cys-115 and Cys-159-Cys-208. Asn-201 and Asn-247 each carry an N-linked (GlcNAc...) asparagine glycan. 2 Fibronectin type-III domains span residues 249-346 (TLLN…LPEQ) and 348-443 (PSAP…LEQA). Asn-361, Asn-390, and Asn-397 each carry an N-linked (GlcNAc...) asparagine glycan. 2 disordered regions span residues 533-553 (TSGS…GLDP) and 586-616 (LIAE…AGTS). Positions 534–550 (SGSRDLSSSSSLSSRLG) are enriched in low complexity. Residues 592-601 (SSPPVRPSPK) show a composition bias toward pro residues. Residues Asn-681 and Asn-713 are each glycosylated (N-linked (GlcNAc...) asparagine). Positions 711 to 801 (HRNSSELASR…LEEEEDQDSV (91 aa)) are disordered. Low complexity predominate over residues 745-759 (LQAPSSDPLPAAPLS). Positions 760-771 (VLNSSRPSSPQA) are enriched in polar residues. N-linked (GlcNAc...) asparagine glycosylation is found at Asn-762 and Asn-783. A compositionally biased stretch (low complexity) spans 772 to 791 (SFLSCPSPSSSNLSSSSLSS). 2 positions are modified to phosphoserine: Ser-814 and Ser-947. A disordered region spans residues 980–1012 (RLGRGLPPWPPDSRASSQRSWLTGAVPKAGDSS).

Belongs to the immunoglobulin superfamily. ROBO family. Interacts with SLIT2 and ENAH. As to expression, expressed specifically in embryo and adult vascular endothelium.

Its function is as follows. Receptor for Slit proteins, at least for SLIT2, and seems to be involved in angiogenesis and vascular patterning. May mediate the inhibition of primary endothelial cell migration by Slit proteins. Involved in the maintenance of endothelial barrier organization and function. In Mus musculus (Mouse), this protein is Roundabout homolog 4 (Robo4).